We begin with the raw amino-acid sequence, 248 residues long: Granzyme C (248 aa).

The first 18 residues, methionine 1 to alanine 18, serve as a signal peptide directing secretion. A propeptide spanning residues glutamate 19–glutamate 20 is cleaved from the precursor. A Peptidase S1 domain is found at isoleucine 21 to lysine 246. Cysteine 50 and cysteine 66 are disulfide-bonded. Active-site charge relay system residues include histidine 65 and aspartate 109. Disulfide bonds link cysteine 143/cysteine 210 and cysteine 174/cysteine 189. Serine 204 (charge relay system) is an active-site residue.

It belongs to the peptidase S1 family. Granzyme subfamily.

It is found in the cytolytic granule. In terms of biological role, this enzyme is probably necessary for target cell lysis in cell-mediated immune responses. In Mus musculus (Mouse), this protein is Granzyme C (Gzmc).